Consider the following 408-residue polypeptide: Exo-alpha-sialidase ARB_03431 (408 aa).

An N-terminal signal peptide occupies residues 1 to 22 (MGIKQWLLSLVVVAISATATQA). The substrate site is built by R62, R81, D87, and Q150. N237 is a glycosylation site (N-linked (GlcNAc...) asparagine). Residues R267, R324, 324–325 (RT), 333–334 (YD), K339, Y360, D378, and 378–380 (DWY) contribute to the substrate site. A glycan (N-linked (GlcNAc...) asparagine) is linked at N398.

Belongs to the glycosyl hydrolase 33 family.

The protein resides in the secreted. The catalysed reaction is Hydrolysis of alpha-(2-&gt;3)-, alpha-(2-&gt;6)-, alpha-(2-&gt;8)- glycosidic linkages of terminal sialic acid residues in oligosaccharides, glycoproteins, glycolipids, colominic acid and synthetic substrates.. In terms of biological role, sialidase is able to release sialic acid from a wide variety of natural substrates. The sequence is that of Exo-alpha-sialidase ARB_03431 from Arthroderma benhamiae (strain ATCC MYA-4681 / CBS 112371) (Trichophyton mentagrophytes).